Here is a 462-residue protein sequence, read N- to C-terminus: Argininosuccinate lyase (462 aa).

Belongs to the lyase 1 family. Argininosuccinate lyase subfamily.

The protein resides in the cytoplasm. It carries out the reaction 2-(N(omega)-L-arginino)succinate = fumarate + L-arginine. It functions in the pathway amino-acid biosynthesis; L-arginine biosynthesis; L-arginine from L-ornithine and carbamoyl phosphate: step 3/3. The protein is Argininosuccinate lyase of Bacillus cereus (strain AH820).